The chain runs to 488 residues: Diacylglycerol O-acyltransferase 1 (488 aa).

Residues 1 to 57 are disordered; sequence MGDRGSSRRRRTGSRPSSHGGGGPAAAEEEVRDAAAGPDVGAAGDAPAPAPNKDGDA. Residues 1 to 83 are Cytoplasmic-facing; sequence MGDRGSSRRR…SLFSSDSGFS (83 aa). The tract at residues 1–91 is involved in homomerization; sequence MGDRGSSRRR…FSNYRGILNW (91 aa). Residues Ser-17 and Ser-18 each carry the phosphoserine modification. Positions 34-47 are enriched in low complexity; the sequence is AAAGPDVGAAGDAP. A helical transmembrane segment spans residues 84–118; it reads NYRGILNWCVVMLILSNARLFLENLIKYGILVDPI. Residues 119–130 are Lumenal-facing; it reads QVVSLFLKDPYS. An extracellular loop 1 (EL1) region spans residues 119-130; sequence QVVSLFLKDPYS. A helical membrane pass occupies residues 131–156; sequence WPAPCLVIAANVFAVAAFQVEKRLAV. The segment at 131-488 is MBOAT fold; it reads WPAPCLVIAA…LNYEAPAAEA (358 aa). Residues 157–161 are Cytoplasmic-facing; the sequence is GALTE. The chain crosses the membrane as a helical span at residues 162–184; that stretch reads QAGLLLHVANLATILCFPAAVVL. At 185-191 the chain is on the lumenal side; the sequence is LVESITP. The helical transmembrane segment at 192–223 threads the bilayer; that stretch reads VGSLLALMAHTILFLKLFSYRDVNSWCRRARA. At 224 to 273 the chain is on the cytoplasmic side; the sequence is KAASAGKKASSAAAPHTVSYPDNLTYRDLYYFLFAPTLCYELNFPRSPRI. The segment at 224–276 is intracellular loop 1 (IL1); that stretch reads KAASAGKKASSAAAPHTVSYPDNLTYRDLYYFLFAPTLCYELNFPRSPRIRKR. A helical membrane pass occupies residues 274–308; that stretch reads RKRFLLRRILEMLFFTQLQVGLIQQWMVPTIQNSM. The Lumenal portion of the chain corresponds to 309-315; the sequence is KPFKDMD. The helical transmembrane segment at 316-353 threads the bilayer; it reads YSRIIERLLKLAVPNHLIWLIFFYWLFHSCLNAVAELM. At 354–399 the chain is on the cytoplasmic side; sequence QFGDREFYRDWWNSESVTYFWQNWNIPVHKWCIRHFYKPMLRRGSS. The interval 354–399 is intracellular loop 2 (IL2); the sequence is QFGDREFYRDWWNSESVTYFWQNWNIPVHKWCIRHFYKPMLRRGSS. The FYXDWWN motif motif lies at 360–366; that stretch reads FYRDWWN. An acyl-CoA-binding positions include 374–382, Tyr-390, and Arg-404; that span reads WQNWNIPVH. Residues 380–394 form an amphipathic helix (AH) region; sequence PVHKWCIRHFYKPML. The helical transmembrane segment at 400 to 420 threads the bilayer; the sequence is KWMARTGVFLASAFFHEYLVS. His-415 is an active-site residue. Over 421 to 428 the chain is Lumenal; it reads VPLRMFRL. A helical transmembrane segment spans residues 429-447; it reads WAFTGMMAQIPLAWFVGRF. The Cytoplasmic portion of the chain corresponds to 448-449; sequence FQ. Residues 450–481 traverse the membrane as a helical segment; the sequence is GNYGNAAVWLSLIIGQPIAVLMYVHDYYVLNY. Residue Tyr-477 participates in an acyl-CoA binding. The Lumenal segment spans residues 482 to 488; that stretch reads EAPAAEA.

It belongs to the membrane-bound acyltransferase family. Sterol o-acyltransferase subfamily. In terms of assembly, homodimer or homotetramer; both forms have similar enzymatic activities.

It is found in the endoplasmic reticulum membrane. The catalysed reaction is an acyl-CoA + a 1,2-diacyl-sn-glycerol = a triacyl-sn-glycerol + CoA. It catalyses the reaction all-trans-retinol + an acyl-CoA = an all-trans-retinyl ester + CoA. It carries out the reaction 2-(9Z-octadecenoyl)-glycerol + (9Z)-octadecenoyl-CoA = 1,2-di-(9Z-octadecenoyl)-sn-glycerol + CoA. The enzyme catalyses 1,2-di-(9Z-octadecenoyl)-sn-glycerol + (9Z)-octadecenoyl-CoA = 1,2,3-tri-(9Z-octadecenoyl)-glycerol + CoA. The catalysed reaction is all-trans-retinol + hexadecanoyl-CoA = all-trans-retinyl hexadecanoate + CoA. It catalyses the reaction 1-O-(9Z-octadecenyl)-glycerol + (9Z)-octadecenoyl-CoA = 1-O-(9Z-octadecyl)-3-(9Z-octadecenoyl)-glycerol + CoA. It carries out the reaction 1-O-(9Z-octadecyl)-3-(9Z-octadecenoyl)-glycerol + (9Z)-octadecenoyl-CoA = 1-O-(9Z-octadecenyl)-2,3-di-(9Z-octadecenoyl)glycerol + CoA. The enzyme catalyses 1-(9Z-octadecenoyl)-glycerol + (9Z)-octadecenoyl-CoA = 1,2-di-(9Z-octadecenoyl)-glycerol + CoA. The catalysed reaction is 1,2-di-(9Z-octadecenoyl)-glycerol + (9Z)-octadecenoate + H(+) = 1,2,3-tri-(9Z-octadecenoyl)-glycerol + H2O. It catalyses the reaction 1-octadecanoyl-2-(5Z,8Z,11Z,14Z-eicosatetraenoyl)-sn-glycerol + (9Z)-octadecenoyl-CoA = 1-octadecanoyl-2-(5Z,8Z,11Z,14Z)-eicosatetraenoyl-3-(9Z)-octadecenoyl-sn-glycerol + CoA. It carries out the reaction hexadecane-1,2-diol + 2 hexadecanoyl-CoA = 1,2-O,O-dihexadecanoyl-1,2-hexadecanediol + 2 CoA. The enzyme catalyses hexadecane-1,2-diol + hexadecanoyl-CoA = 2-hydroxyhexadecyl hexadecanoate + CoA. The catalysed reaction is 2-(9Z-octadecenoyl)-glycerol + hexadecanoyl-CoA = 1-hexadecanoyl-2-(9Z-octadecenoyl)-sn-glycerol + CoA. It catalyses the reaction 1,2-di-(9Z-octadecenoyl)-sn-glycerol + hexadecanoyl-CoA = 1,2-di-(9Z)-octadecenoyl-3-hexadecanoyl-sn-glycerol + CoA. It carries out the reaction hexadecan-1-ol + hexadecanoyl-CoA = hexadecanyl hexadecanoate + CoA. The enzyme catalyses 13-cis-retinol + hexadecanoyl-CoA = 13-cis-retinyl hexadecanoate + CoA. The catalysed reaction is 1,3-di-(9Z-octadecenoyl)-glycerol + (9Z)-octadecenoyl-CoA = 1,2,3-tri-(9Z-octadecenoyl)-glycerol + CoA. It catalyses the reaction 2,3-di-(9Z)-octadecenoyl-sn-glycerol + (9Z)-octadecenoyl-CoA = 1,2,3-tri-(9Z-octadecenoyl)-glycerol + CoA. It functions in the pathway lipid metabolism; glycerolipid metabolism. Its activity is regulated as follows. XP620 is a selective DGAT1 inhibitor. Functionally, catalyzes the terminal and only committed step in triacylglycerol synthesis by using diacylglycerol and fatty acyl CoA as substrates. Highly expressed in epithelial cells of the small intestine and its activity is essential for the absorption of dietary fats. In liver, plays a role in esterifying exogenous fatty acids to glycerol, and is required to synthesize fat for storage. Also present in female mammary glands, where it produces fat in the milk. May be involved in VLDL (very low density lipoprotein) assembly. In contrast to DGAT2 it is not essential for survival. Functions as the major acyl-CoA retinol acyltransferase (ARAT) in the skin, where it acts to maintain retinoid homeostasis and prevent retinoid toxicity leading to skin and hair disorders. Exhibits additional acyltransferase activities, includin acyl CoA:monoacylglycerol acyltransferase (MGAT), wax monoester and wax diester synthases. Also able to use 1-monoalkylglycerol (1-MAkG) as an acyl acceptor for the synthesis of monoalkyl-monoacylglycerol (MAMAG). The protein is Diacylglycerol O-acyltransferase 1 of Homo sapiens (Human).